The primary structure comprises 355 residues: MSDTTLSLLSPEKRKALEFAISQIERSFGKGSIMRLGDATSMKVETISSGALTLDLALGGGLPKGRIIEIYGPESSGKTTLALHAIAEVQKAGGVAAFVDAEHALDPTYAAALRVDIQNLLVAQPDTGEAALEIVDQLVRSTAVDIIVVDSVAALVPRAEIEGDMGESHVGLQARLMSQALRKINGNISKTGCTVIFLNQLRQKIGLTYGNPETTTGGVALKFYASVRLDIRRVQTLKKGTEEFGIRAKVKVAKNKVAPPFRIAEFDIIFGKGIANLGCILDMAEEVGVITRKGAWYSYNGENLAQGRDNTINYMEENPSFAQEIEQQVRQRFDQRVALSANTAAYTEEEIGEGE.

Residue 72-79 (GPESSGKT) participates in ATP binding.

The protein belongs to the RecA family.

It is found in the cytoplasm. Its function is as follows. Can catalyze the hydrolysis of ATP in the presence of single-stranded DNA, the ATP-dependent uptake of single-stranded DNA by duplex DNA, and the ATP-dependent hybridization of homologous single-stranded DNAs. It interacts with LexA causing its activation and leading to its autocatalytic cleavage. This Thermosynechococcus vestitus (strain NIES-2133 / IAM M-273 / BP-1) protein is Protein RecA.